Here is a 454-residue protein sequence, read N- to C-terminus: Cholesterol 7-desaturase nvd (454 aa).

2 helical membrane-spanning segments follow: residues 13-33 (VLCP…LGAG) and 47-67 (TTLS…LWGW). The Rieske domain occupies 117–221 (WYRALDSHLL…SCELNGMVFV (105 aa)). Residues C158, H160, C178, and H181 each coordinate [2Fe-2S] cluster.

The protein belongs to the cholesterol 7-desaturase family. [2Fe-2S] cluster is required as a cofactor.

It is found in the membrane. It catalyses the reaction cholesterol + NADPH + O2 + H(+) = 7-dehydrocholesterol + NADP(+) + 2 H2O. The catalysed reaction is cholesterol + NADH + O2 + H(+) = 7-dehydrocholesterol + NAD(+) + 2 H2O. It participates in steroid hormone biosynthesis; dafachronic acid biosynthesis. Functionally, catalyzes the production of 7-dehydrocholesterol (7-DHC or cholesta-5,7-dien-3beta-ol) by inserting a double bond (desaturating) at the C7-C8 single bond of cholesterol. This reaction is the first step in the synthesis of the steroid hormone Delta(7)-dafachronic acid. This Xenopus laevis (African clawed frog) protein is Cholesterol 7-desaturase nvd (nvd).